We begin with the raw amino-acid sequence, 87 residues long: Small ribosomal subunit protein bS20 (87 aa).

The segment covering 1 to 22 (MANIKSAKKRAVQSEKRRKHNA) has biased composition (basic residues). The disordered stretch occupies residues 1–27 (MANIKSAKKRAVQSEKRRKHNASSRSM).

It belongs to the bacterial ribosomal protein bS20 family.

Functionally, binds directly to 16S ribosomal RNA. The chain is Small ribosomal subunit protein bS20 from Pectobacterium atrosepticum (strain SCRI 1043 / ATCC BAA-672) (Erwinia carotovora subsp. atroseptica).